The following is a 312-amino-acid chain: R2-like ligand binding oxidase (312 aa).

Glu68, Glu101, and His104 together coordinate Mn(2+). Residues 71 to 162 (VTQDIQPFMA…QAQVRASVTY (92 aa)) constitute a cross-link (3-(O4'-tyrosyl)-valine (Val-Tyr)). Glu101 contacts Fe cation. Positions 167, 202, and 205 each coordinate Fe cation.

This sequence belongs to the ribonucleoside diphosphate reductase small chain family. R2-like ligand binding oxidase subfamily. As to quaternary structure, homodimer. The cofactor is Fe cation. Mn(2+) serves as cofactor.

Probable oxidase that might be involved in lipid metabolism. This is R2-like ligand binding oxidase from Mycolicibacterium gilvum (strain PYR-GCK) (Mycobacterium gilvum (strain PYR-GCK)).